The chain runs to 349 residues: Ion-translocating oxidoreductase complex subunit D (349 aa).

Helical transmembrane passes span 20–40 (IMFL…YFFG), 42–62 (GVLI…IIIL), 83–105 (VLLG…CFFA), and 120–140 (IFNP…VHMT). Position 184 is an FMN phosphoryl threonine (T184). A run of 5 helical transmembrane segments spans residues 212 to 232 (IVSI…CFLL), 236 to 256 (VICW…SSIT), 263 to 283 (FFCS…AFFI), 291 to 311 (SCTK…VWII), and 319 to 339 (DGIA…DAYL).

Belongs to the NqrB/RnfD family. As to quaternary structure, the complex is composed of six subunits: RnfA, RnfB, RnfC, RnfD, RnfE and RnfG. It depends on FMN as a cofactor.

It is found in the cell inner membrane. Its function is as follows. Part of a membrane-bound complex that couples electron transfer with translocation of ions across the membrane. This chain is Ion-translocating oxidoreductase complex subunit D, found in Buchnera aphidicola subsp. Schizaphis graminum (strain Sg).